The chain runs to 131 residues: Small ribosomal subunit protein uS8 (131 aa).

This sequence belongs to the universal ribosomal protein uS8 family. Part of the 30S ribosomal subunit. Contacts proteins S5 and S12.

Functionally, one of the primary rRNA binding proteins, it binds directly to 16S rRNA central domain where it helps coordinate assembly of the platform of the 30S subunit. This is Small ribosomal subunit protein uS8 from Geobacillus stearothermophilus (Bacillus stearothermophilus).